The following is a 504-amino-acid chain: MSFSVDVLANIAIELQRGIGHQDRFQRLITTLRQVLECDASALLRYDSRQFIPLAIDGLAKDVLGRRFALEGHPRLEAIARAGDVVRFPADSELPDPYDGLIPGQESLKVHACVGLPLFAGQNLIGALTLDGMQPDQFDVFSDEELRLIAALAAGALSNALLIEQLESQNMLPGDAAPFEAVKQTQMIGLSPGMTQLKKEIEIVAASDLNVLISGETGTGKELVAKAIHEASPRAVNPLVYLNCAALPESVAESELFGHVKGAFTGAISNRSGKFEMADNGTLFLDEIGELSLALQAKLLRVLQYGDIQRVGDDRSLRVDVRVLAATNRDLREEVLAGRFRADLFHRLSVFPLSVPPLRERGDDVILLAGYFCEQCRLRLGLSRVVLSAGARNLLQHYNFPGNVRELEHAIHRAVVLARATRSGDEVILEAQHFAFPEVTLPPPEVAAVPVVKQNLREATEAFQRETIRQALAQNHHNWAACARMLETDVANLHRLAKRLGLKD.

Residue Asp57 is modified to 4-aspartylphosphate. The Sigma-54 factor interaction domain occupies 187–416 (MIGLSPGMTQ…LEHAIHRAVV (230 aa)). ATP contacts are provided by residues 215-222 (GETGTGKE) and 278-287 (ADNGTLFLDE). The H-T-H motif DNA-binding region spans 479–498 (WAACARMLETDVANLHRLAK).

It functions in the pathway nitrogen metabolism; nitric oxide reduction. Functionally, required for the expression of anaerobic nitric oxide (NO) reductase, acts as a transcriptional activator for at least the norVW operon. Activation also requires sigma-54. The chain is Anaerobic nitric oxide reductase transcription regulator NorR from Escherichia coli O127:H6 (strain E2348/69 / EPEC).